We begin with the raw amino-acid sequence, 132 residues long: Phosphomevalonate dehydratase small subunit (132 aa).

Ser62 (proton acceptor) is an active-site residue.

The protein belongs to the AcnX type II small subunit family. In terms of assembly, heterodimer composed of a large subunit (PMDh-L) and a small subunit (PMDh-S).

The catalysed reaction is (R)-5-phosphomevalonate = (2E)-3-methyl-5-phosphooxypent-2-enoate + H2O. The protein operates within isoprenoid biosynthesis; isopentenyl diphosphate biosynthesis via mevalonate pathway. Its function is as follows. Component of a hydro-lyase that catalyzes the dehydration of mevalonate 5-phosphate (MVA5P) to form trans-anhydromevalonate 5-phosphate (tAHMP). Involved in the archaeal mevalonate (MVA) pathway, which provides fundamental precursors for isoprenoid biosynthesis, such as isopentenyl diphosphate (IPP) and dimethylallyl diphosphate (DMAPP). This Methanocella arvoryzae (strain DSM 22066 / NBRC 105507 / MRE50) protein is Phosphomevalonate dehydratase small subunit.